We begin with the raw amino-acid sequence, 346 residues long: Elongation factor Ts (346 aa).

Residues 80 to 83 (TDFV) form an involved in Mg(2+) ion dislocation from EF-Tu region.

Belongs to the EF-Ts family.

Its subcellular location is the cytoplasm. Associates with the EF-Tu.GDP complex and induces the exchange of GDP to GTP. It remains bound to the aminoacyl-tRNA.EF-Tu.GTP complex up to the GTP hydrolysis stage on the ribosome. The protein is Elongation factor Ts of Streptococcus pyogenes serotype M3 (strain ATCC BAA-595 / MGAS315).